Consider the following 156-residue polypeptide: Oxidized purine nucleoside triphosphate hydrolase (156 aa).

The 130-residue stretch at 3–132 (TSRLYTLVLV…WFPLLLQKKK (130 aa)) folds into the Nudix hydrolase domain. 2-oxo-dATP is bound at residue threonine 8. 8-oxo-dGTP-binding positions include threonine 8, lysine 23, asparagine 33, 35-38 (FGGK), and glutamate 52. 2-oxo-dATP is bound by residues asparagine 33 and 35 to 38 (FGGK). The Mg(2+) site is built by glycine 36, glutamate 52, glutamate 55, glutamate 56, and glutamate 100. The Nudix box signature appears at 37 to 58 (GKVQEGETIEDGAKRELLEESG). Residues glutamate 56, glutamate 100, and 117-120 (WPDD) contribute to the 8-oxo-dGTP site. 117–120 (WPDD) contacts 2-oxo-dATP.

The protein belongs to the Nudix hydrolase family. As to quaternary structure, monomer. Requires Mg(2+) as cofactor. In terms of tissue distribution, high expression levels detected in thymus, liver, spleen, kidney, testis and large intestine, with lower levels detected in brain, heart, lung and stomach (at protein level). Expressed in kidney, liver and small intestine.

It localises to the cytoplasm. It is found in the nucleus. Its subcellular location is the nucleus membrane. The protein localises to the cytoplasmic vesicle. The protein resides in the secretory vesicle. It localises to the acrosome. It carries out the reaction 2-oxo-dATP + H2O = 2-oxo-dAMP + diphosphate + H(+). It catalyses the reaction 2-oxo-ATP + H2O = 2-oxo-AMP + diphosphate + H(+). The enzyme catalyses 8-oxo-dGTP + H2O = 8-oxo-dGMP + diphosphate + H(+). The catalysed reaction is 8-oxo-dATP + H2O = 8-oxo-dAMP + diphosphate + H(+). It carries out the reaction O(6)-methyl-dGTP + H2O = O(6)-methyl-dGMP + diphosphate + H(+). It catalyses the reaction N(6)-methyl-dATP + H2O = N(6)-methyl-dAMP + diphosphate + H(+). The enzyme catalyses N(6)-methyl-ATP + H2O = N(6)-methyl-AMP + diphosphate + H(+). Its function is as follows. Oxidized purine nucleoside triphosphate hydrolase which is a prominent sanitizer of the oxidized nucleotide pool. Catalyzes the hydrolysis of 2-oxo-dATP (2-hydroxy-dATP) into 2-oxo-dAMP. Also has a significant hydrolase activity toward 2-oxo-ATP, 8-oxo-dGTP and 8-oxo-dATP. Through the hydrolysis of oxidized purine nucleoside triphosphates, prevents their incorporation into DNA and the subsequent transversions A:T to C:G and G:C to T:A. Also catalyzes the hydrolysis of methylated purine nucleoside triphosphate preventing their integration into DNA. Through this antimutagenic activity protects cells from oxidative stress. The polypeptide is Oxidized purine nucleoside triphosphate hydrolase (Nudt1) (Mus musculus (Mouse)).